The chain runs to 709 residues: ATP-binding cassette sub-family F member 3 (709 aa).

A2 carries the N-acetylalanine modification. S83 is subject to Phosphoserine. Positions 129-143 are enriched in basic and acidic residues; sequence RLKAKQEKRSEKDTL. A disordered region spans residues 129–171; sequence RLKAKQEKRSEKDTLKTSNPLVLEEASASQAGSRKESRLESSG. A phosphoserine mark is found at S155, S157, and S161. Over residues 161-171 the composition is skewed to basic and acidic residues; it reads SRKESRLESSG. ABC transporter domains are found at residues 178 to 424 and 492 to 707; these read VRIE…LNQQ and LQLD…RREG. 210–217 provides a ligand contact to ATP; it reads GRNGLGKT. S283 is modified (phosphoserine). 525-532 contacts ATP; that stretch reads GENGAGKS.

This sequence belongs to the ABC transporter superfamily. ABCF family. EF3 subfamily.

Its function is as follows. Displays an antiviral effect against flaviviruses in the presence of OAS1B. The protein is ATP-binding cassette sub-family F member 3 (ABCF3) of Pongo abelii (Sumatran orangutan).